The chain runs to 770 residues: Coiled-coil alpha-helical rod protein 1 (770 aa).

Coiled coils occupy residues 56 to 289 (STVT…DLQA), 334 to 420 (LRNW…RQEQ), and 476 to 669 (GLMA…RKEE). Disordered stretches follow at residues 573–592 (LEAA…SLRQ), 641–672 (LRQI…EGQR), 700–721 (NKKC…AASC), and 744–770 (SRDE…PLLS). The span at 648–672 (ATQEKERNQELRRLQDEARKEEGQR) shows a compositional bias: basic and acidic residues. A compositionally biased stretch (low complexity) spans 701 to 721 (KKCSPRSVESSSSESPAAASC).

Its subcellular location is the cytoplasm. The protein localises to the nucleus. May be a regulator of keratinocyte proliferation or differentiation. This Mus musculus (Mouse) protein is Coiled-coil alpha-helical rod protein 1 (Cchcr1).